The chain runs to 93 residues: uncharacterized protein (93 aa).

This sequence to B.subtilis YdcN C-terminal region.

This is an uncharacterized protein from Methanocaldococcus jannaschii (strain ATCC 43067 / DSM 2661 / JAL-1 / JCM 10045 / NBRC 100440) (Methanococcus jannaschii).